Here is a 367-residue protein sequence, read N- to C-terminus: Nociceptin receptor (367 aa).

Residues 1–45 (MESLFPAPYWEVLYGSHFQGNLSLLNETVPHHLLLNASHSAFLPL) lie on the Extracellular side of the membrane. N-linked (GlcNAc...) asparagine glycans are attached at residues Asn21, Asn26, and Asn36. A helical transmembrane segment spans residues 46–71 (GLKVTIVGLYLAVCIGGLLGNCLVMY). Over 72–84 (VILRHTKMKTATN) the chain is Cytoplasmic. Residues 85 to 106 (IYIFNLALADTLVLLTLPFQGT) traverse the membrane as a helical segment. The Extracellular segment spans residues 107–121 (DILLGFWPFGNALCK). Residues Cys120 and Cys197 are joined by a disulfide bond. Residues 122 to 143 (TVIAIDYYNMFTSTFTLTAMSV) form a helical membrane-spanning segment. Over 144–162 (DRYVAICHPIRALDVRTSS) the chain is Cytoplasmic. The chain crosses the membrane as a helical span at residues 163–185 (KAQAVNVAIWALASVVGVPVAIM). Residues 186 to 208 (GSAQVEDEEIECLVEIPAPQDYW) lie on the Extracellular side of the membrane. The helical transmembrane segment at 209–233 (GPVFAICIFLFSFIIPVLIISVCYS) threads the bilayer. The Cytoplasmic segment spans residues 234–261 (LMIRRLRGVRLLSGSREKDRNLRRITRL). A helical membrane pass occupies residues 262–282 (VLVVVAVFVGCWTPVQVFVLV). The Extracellular segment spans residues 283 to 297 (QGLGVQPGSETAVAI). Residues 298–319 (LRFCTALGYVNSCLNPILYAFL) traverse the membrane as a helical segment. At 320 to 367 (DENFKACFRKFCCASSLHREMQVSDRVRSIAKDVGLGCKTSETVPRPA) the chain is on the cytoplasmic side. A lipid anchor (S-palmitoyl cysteine) is attached at Cys331.

Belongs to the G-protein coupled receptor 1 family. Phosphorylation at Ser-360 requires GRK3. As to expression, highly expressed in several brain areas, the intestine, liver and spleen. Detected in sympathetic stellate ganglion neurons.

The protein localises to the cell membrane. Its subcellular location is the cytoplasmic vesicle. Functionally, G-protein coupled opioid receptor that functions as a receptor for the endogenous neuropeptide nociceptin. Ligand binding causes a conformation change that triggers signaling via guanine nucleotide-binding proteins (G proteins) and modulates the activity of down-stream effectors. Signaling via G proteins mediates inhibition of adenylate cyclase activity and calcium channel activity. Arrestins modulate signaling via G proteins and mediate the activation of alternative signaling pathways that lead to the activation of MAP kinases. Plays a role in modulating nociception and the perception of pain. Plays a role in the regulation of locomotor activity by the neuropeptide nociceptin. This chain is Nociceptin receptor (Oprl1), found in Rattus norvegicus (Rat).